The following is a 197-amino-acid chain: uncharacterized protein (197 aa).

4 helical membrane-spanning segments follow: residues 11–31 (IALI…ISAS), 85–105 (STFM…SIFV), 109–129 (AVVV…VVLF), and 174–194 (VGTG…YPFI).

The protein localises to the cell membrane. This is an uncharacterized protein from Methanocaldococcus jannaschii (strain ATCC 43067 / DSM 2661 / JAL-1 / JCM 10045 / NBRC 100440) (Methanococcus jannaschii).